The chain runs to 312 residues: Ribosomal RNA small subunit methyltransferase H (312 aa).

The tract at residues 1–24 (MNIMTANQGAVSPSQTESEASPPT) is disordered. Residues 55 to 57 (AGH), Asp-72, Tyr-96, Asp-117, and Gln-124 each bind S-adenosyl-L-methionine. Positions 288-312 (EQVDNPRARSAKLRVGERAAAPEGS) are disordered.

Belongs to the methyltransferase superfamily. RsmH family.

It is found in the cytoplasm. The enzyme catalyses cytidine(1402) in 16S rRNA + S-adenosyl-L-methionine = N(4)-methylcytidine(1402) in 16S rRNA + S-adenosyl-L-homocysteine + H(+). Functionally, specifically methylates the N4 position of cytidine in position 1402 (C1402) of 16S rRNA. The chain is Ribosomal RNA small subunit methyltransferase H from Deinococcus radiodurans (strain ATCC 13939 / DSM 20539 / JCM 16871 / CCUG 27074 / LMG 4051 / NBRC 15346 / NCIMB 9279 / VKM B-1422 / R1).